A 279-amino-acid chain; its full sequence is Probable endonuclease 4 (279 aa).

Residues His66, His106, Glu142, Asp175, His178, His212, Asp225, His227, and Glu257 each contribute to the Zn(2+) site.

The protein belongs to the AP endonuclease 2 family. It depends on Zn(2+) as a cofactor.

The catalysed reaction is Endonucleolytic cleavage to 5'-phosphooligonucleotide end-products.. Endonuclease IV plays a role in DNA repair. It cleaves phosphodiester bonds at apurinic or apyrimidinic (AP) sites, generating a 3'-hydroxyl group and a 5'-terminal sugar phosphate. The chain is Probable endonuclease 4 from Moorella thermoacetica (strain ATCC 39073 / JCM 9320).